The chain runs to 89 residues: Small ribosomal subunit protein uS15 (89 aa).

Belongs to the universal ribosomal protein uS15 family. In terms of assembly, part of the 30S ribosomal subunit. Forms a bridge to the 50S subunit in the 70S ribosome, contacting the 23S rRNA.

In terms of biological role, one of the primary rRNA binding proteins, it binds directly to 16S rRNA where it helps nucleate assembly of the platform of the 30S subunit by binding and bridging several RNA helices of the 16S rRNA. Forms an intersubunit bridge (bridge B4) with the 23S rRNA of the 50S subunit in the ribosome. The sequence is that of Small ribosomal subunit protein uS15 from Vibrio vulnificus (strain YJ016).